The sequence spans 214 residues: Redox-sensing transcriptional repressor Rex (214 aa).

A DNA-binding region (H-T-H motif) is located at residues 17–56; sequence LYYRIFKRFHADQVEKASSKQIADAMGIDSATVRRDFSYF. 91–96 provides a ligand contact to NAD(+); sequence GCGNIG.

The protein belongs to the transcriptional regulatory Rex family. As to quaternary structure, homodimer.

The protein resides in the cytoplasm. In terms of biological role, modulates transcription in response to changes in cellular NADH/NAD(+) redox state. This Streptococcus pyogenes serotype M12 (strain MGAS9429) protein is Redox-sensing transcriptional repressor Rex.